Here is a 32-residue protein sequence, read N- to C-terminus: Ranatuerin-2La (32 aa).

The cysteines at positions 27 and 32 are disulfide-linked.

In terms of tissue distribution, expressed by the skin glands.

Its subcellular location is the secreted. Functionally, antibacterial activity against Gram-positive bacterium S.aureus and Gram-negative bacterium E.coli. Weak activity against C.albicans. The polypeptide is Ranatuerin-2La (Rana luteiventris (Columbia spotted frog)).